A 382-amino-acid chain; its full sequence is Sulfate adenylyltransferase (382 aa).

The protein belongs to the sulfate adenylyltransferase family.

The catalysed reaction is sulfate + ATP + H(+) = adenosine 5'-phosphosulfate + diphosphate. It functions in the pathway sulfur metabolism; hydrogen sulfide biosynthesis; sulfite from sulfate: step 1/3. This chain is Sulfate adenylyltransferase, found in Ignicoccus hospitalis (strain KIN4/I / DSM 18386 / JCM 14125).